Here is a 363-residue protein sequence, read N- to C-terminus: Peptide chain release factor 1 (363 aa).

Gln-237 carries the post-translational modification N5-methylglutamine. The tract at residues 281–302 (QQAEDEKSHAEEQTIRRSLVAS) is disordered. Over residues 282–295 (QAEDEKSHAEEQTI) the composition is skewed to basic and acidic residues.

The protein belongs to the prokaryotic/mitochondrial release factor family. Methylated by PrmC. Methylation increases the termination efficiency of RF1.

The protein resides in the cytoplasm. Its function is as follows. Peptide chain release factor 1 directs the termination of translation in response to the peptide chain termination codons UAG and UAA. This Psychromonas ingrahamii (strain DSM 17664 / CCUG 51855 / 37) protein is Peptide chain release factor 1.